The following is a 115-amino-acid chain: Holo-[acyl-carrier-protein] synthase (115 aa).

Residues Asp-6 and Glu-51 each contribute to the Mg(2+) site.

This sequence belongs to the P-Pant transferase superfamily. AcpS family. Mg(2+) serves as cofactor.

The protein resides in the cytoplasm. It catalyses the reaction apo-[ACP] + CoA = holo-[ACP] + adenosine 3',5'-bisphosphate + H(+). Transfers the 4'-phosphopantetheine moiety from coenzyme A to a Ser of acyl-carrier-protein. In Campylobacter jejuni subsp. jejuni serotype O:2 (strain ATCC 700819 / NCTC 11168), this protein is Holo-[acyl-carrier-protein] synthase.